The sequence spans 104 residues: Ig kappa chain V region XP-1 (104 aa).

Residues 1-24 (ADIVMTQTPASVSEPVGGTVTIKC) are framework-1. A complementarity-determining-1 region spans residues 25–35 (QASQSIFBBLA). Residues 36 to 49 (WYQKPGZPPKGLLY) form a framework-2 region. The interval 50–56 (TBYTLAS) is complementarity-determining-2. The framework-3 stretch occupies residues 57–88 (GVSSRFSGGGSGTBFTLTISDLECABAATYYC). The tract at residues 89–100 (EXTGVSZBXBKG) is complementarity-determining-3. Positions 101-104 (FGGG) are framework-4.

This is Ig kappa chain V region XP-1 from Oryctolagus cuniculus (Rabbit).